A 101-amino-acid polypeptide reads, in one-letter code: Small ribosomal subunit protein uS14 (101 aa).

This sequence belongs to the universal ribosomal protein uS14 family. As to quaternary structure, part of the 30S ribosomal subunit. Contacts proteins S3 and S10.

In terms of biological role, binds 16S rRNA, required for the assembly of 30S particles and may also be responsible for determining the conformation of the 16S rRNA at the A site. The protein is Small ribosomal subunit protein uS14 of Stutzerimonas stutzeri (strain A1501) (Pseudomonas stutzeri).